Here is a 75-residue protein sequence, read N- to C-terminus: uncharacterized protein (75 aa).

The helical transmembrane segment at 49 to 69 threads the bilayer; it reads VDIVAVATTLPFIVAVICIVF.

It is found in the host membrane. This is an uncharacterized protein from Saccharolobus islandicus (Sulfolobus islandicus).